The chain runs to 178 residues: ATP synthase subunit delta (178 aa).

Belongs to the ATPase delta chain family. F-type ATPases have 2 components, F(1) - the catalytic core - and F(0) - the membrane proton channel. F(1) has five subunits: alpha(3), beta(3), gamma(1), delta(1), epsilon(1). F(0) has three main subunits: a(1), b(2) and c(10-14). The alpha and beta chains form an alternating ring which encloses part of the gamma chain. F(1) is attached to F(0) by a central stalk formed by the gamma and epsilon chains, while a peripheral stalk is formed by the delta and b chains.

Its subcellular location is the cell inner membrane. F(1)F(0) ATP synthase produces ATP from ADP in the presence of a proton or sodium gradient. F-type ATPases consist of two structural domains, F(1) containing the extramembraneous catalytic core and F(0) containing the membrane proton channel, linked together by a central stalk and a peripheral stalk. During catalysis, ATP synthesis in the catalytic domain of F(1) is coupled via a rotary mechanism of the central stalk subunits to proton translocation. Functionally, this protein is part of the stalk that links CF(0) to CF(1). It either transmits conformational changes from CF(0) to CF(1) or is implicated in proton conduction. This is ATP synthase subunit delta from Pelodictyon phaeoclathratiforme (strain DSM 5477 / BU-1).